The chain runs to 306 residues: MNQYKNFIMQFEDIVGNNNVLIDEPMKKHTSFKVGGPADLLITPTTLEQVKDSIILCRNNSIPYYIIGNGSNLLVRDGGIRGVVIKFLKLGDIKVEGDRVIAQSGAPLTNICNEALKSNLGGLEFACGIPGSVGGAVTMNAGAYNGEISQVIESAKVIDKDGNVFLLNKEQLDLGYRMSAIQKYHYIVLEVTFKLHNSEYDTIKNRIMDLNRRRTEKQPLEYPSAGSTFKRPEGHFAAKLIEDTGLKGESIGGAQVSEKHSGFIINKGGATAGDILNLIEFVQNKVMEKFQVDLHTEVRIIGEENN.

The FAD-binding PCMH-type domain maps to 34 to 198; that stretch reads VGGPADLLIT…LEVTFKLHNS (165 aa). Residue R177 is part of the active site. S227 (proton donor) is an active-site residue. The active site involves E297.

Belongs to the MurB family. The cofactor is FAD.

The protein resides in the cytoplasm. The catalysed reaction is UDP-N-acetyl-alpha-D-muramate + NADP(+) = UDP-N-acetyl-3-O-(1-carboxyvinyl)-alpha-D-glucosamine + NADPH + H(+). It participates in cell wall biogenesis; peptidoglycan biosynthesis. Its function is as follows. Cell wall formation. The sequence is that of UDP-N-acetylenolpyruvoylglucosamine reductase from Clostridium botulinum (strain Langeland / NCTC 10281 / Type F).